Consider the following 156-residue polypeptide: MRGDKETTNWLNKSLMKQARQKKLSIIAVGVLSTVAVTVGYLLYLYRGQRNPNIRDVKPKSKCYVLTQDLFDKIENWQEELSKDSVMLVLPEVAHLGNHLKLQLSSIEHKIVIFNNSSAVWSAVRHLKKYELVISRDKTSDMPVDLRRYVGQISHI.

A helical transmembrane segment spans residues 24 to 46 (LSIIAVGVLSTVAVTVGYLLYLY).

The protein belongs to the peroxin-22 family.

Its subcellular location is the peroxisome membrane. Functionally, involved in peroxisome biogenesis. This Kluyveromyces lactis (strain ATCC 8585 / CBS 2359 / DSM 70799 / NBRC 1267 / NRRL Y-1140 / WM37) (Yeast) protein is Peroxisome assembly protein 22 (PEX22).